Here is a 305-residue protein sequence, read N- to C-terminus: tRNA pseudouridine synthase B (305 aa).

The active-site Nucleophile is Asp39.

Belongs to the pseudouridine synthase TruB family. Type 1 subfamily.

The enzyme catalyses uridine(55) in tRNA = pseudouridine(55) in tRNA. Its function is as follows. Responsible for synthesis of pseudouridine from uracil-55 in the psi GC loop of transfer RNAs. The polypeptide is tRNA pseudouridine synthase B (Staphylococcus aureus (strain MRSA252)).